A 412-amino-acid chain; its full sequence is UPF0754 membrane protein syc0451_d (412 aa).

Transmembrane regions (helical) follow at residues 8–28 (LWLLPPVVGGIIGYFTNDLAI) and 390–410 (IGGVLGVLLGCVQSLINVWSL).

It belongs to the UPF0754 family.

It localises to the cell inner membrane. The polypeptide is UPF0754 membrane protein syc0451_d (Synechococcus sp. (strain ATCC 27144 / PCC 6301 / SAUG 1402/1) (Anacystis nidulans)).